Reading from the N-terminus, the 852-residue chain is Lon protease homolog 2, peroxisomal (852 aa).

Ser2 carries the N-acetylserine modification. The region spanning 13–222 (LPLLLTHEGV…MTIPLLVRQI (210 aa)) is the Lon N-terminal domain. 375–382 (GPPGVGKT) lines the ATP pocket. Residues 651–837 (LSQPGVAIGL…DEVLNAAFDG (187 aa)) form the Lon proteolytic domain. Active-site residues include Ser743 and Lys786. The Microbody targeting signal signature appears at 850–852 (SKL).

The protein belongs to the peptidase S16 family. Interacts with PEX5. Interacts with TYSND1. May interact with enzymes involved in beta-oxidation of fatty acids, including ACOX1/AOX.

The protein localises to the peroxisome matrix. The catalysed reaction is Hydrolysis of proteins in presence of ATP.. ATP-dependent serine protease that mediates the selective degradation of misfolded and unassembled polypeptides in the peroxisomal matrix. Necessary for type 2 peroxisome targeting signal (PTS2)-containing protein processing and facilitates peroxisome matrix protein import. May indirectly regulate peroxisomal fatty acid beta-oxidation through degradation of the self-processed forms of TYSND1. This Bos taurus (Bovine) protein is Lon protease homolog 2, peroxisomal.